The primary structure comprises 136 residues: MSQLVYFSSSSENTQRFIERLGLPAVRIPLNERERIQVDEPYILIVPSYGGGGTAGAVPRPVIRFLNDEHNRALLRGVIASGNRNFGEAYGRAGDVIAQKCGVPWLYSFELMGTQSDIENVRKGVTEFWQRQPQNA.

Belongs to the NrdI family.

Probably involved in ribonucleotide reductase function. The chain is Protein NrdI from Escherichia coli O127:H6 (strain E2348/69 / EPEC).